The chain runs to 218 residues: NADH dehydrogenase [ubiquinone] iron-sulfur protein 7, mitochondrial (218 aa).

Residues 34-48 (LPALSPSTSPTSYTR) show a composition bias toward low complexity. The tract at residues 34-61 (LPALSPSTSPTSYTRPGPPSTSPPPPGL) is disordered. Over residues 49 to 60 (PGPPSTSPPPPG) the composition is skewed to pro residues. Residues Cys-93, Cys-94, Cys-158, and Cys-188 each contribute to the [4Fe-4S] cluster site.

Belongs to the complex I 20 kDa subunit family. As to quaternary structure, complex I is composed of at least 49 different subunits. This is a component of the iron-sulfur (IP) fragment of the enzyme. Requires [4Fe-4S] cluster as cofactor.

It is found in the mitochondrion. It catalyses the reaction a ubiquinone + NADH + 5 H(+)(in) = a ubiquinol + NAD(+) + 4 H(+)(out). Its function is as follows. Core subunit of the mitochondrial membrane respiratory chain NADH dehydrogenase (Complex I) that is believed to belong to the minimal assembly required for catalysis. Complex I functions in the transfer of electrons from NADH to the respiratory chain. The immediate electron acceptor for the enzyme is believed to be ubiquinone. The chain is NADH dehydrogenase [ubiquinone] iron-sulfur protein 7, mitochondrial from Arabidopsis thaliana (Mouse-ear cress).